Reading from the N-terminus, the 614-residue chain is Fimbrin (614 aa).

2 EF-hand domains span residues 16–50 (EEIL…DSKK) and 51–86 (GSYD…LKKG). 8 residues coordinate Ca(2+): aspartate 29, aspartate 31, tyrosine 35, threonine 40, aspartate 66, serine 68, arginine 70, and aspartate 75. Actin-binding stretches follow at residues 98–368 (TIKG…GLEP) and 369–614 (LNEE…LMAV). 4 Calponin-homology (CH) domains span residues 112-233 (EEER…RRGL), 261-364 (LPPE…NTHP), 385-495 (EREA…RMNI), and 508-614 (TLSD…LMAV).

It is found in the cytoplasm. Its subcellular location is the cytoskeleton. The protein localises to the actin patch. Binds to actin, and functionally associates with actin structures involved in the development and maintenance of cell polarity. Plays a role in cytokinesis. Plays important roles in mating and in spore formation. The polypeptide is Fimbrin (fim1) (Schizosaccharomyces pombe (strain 972 / ATCC 24843) (Fission yeast)).